The chain runs to 86 residues: Cardiotoxin homolog TA-ctx-like (86 aa).

The N-terminal stretch at 1–21 (MKTLLLTLVVLTIACLDLGYT) is a signal peptide. 4 disulfides stabilise this stretch: cysteine 24/cysteine 45, cysteine 38/cysteine 62, cysteine 66/cysteine 78, and cysteine 79/cysteine 84.

This sequence belongs to the three-finger toxin family. Short-chain subfamily. Orphan group IX sub-subfamily. In terms of tissue distribution, expressed by the venom gland.

It localises to the secreted. In Bungarus multicinctus (Many-banded krait), this protein is Cardiotoxin homolog TA-ctx-like.